The sequence spans 130 residues: Cytochrome b-c1 complex subunit 7 (130 aa).

It belongs to the UQCRB/QCR7 family. As to quaternary structure, component of the ubiquinol-cytochrome c oxidoreductase (cytochrome b-c1 complex, complex III, CIII), a multisubunit enzyme composed of 3 respiratory subunits cytochrome b, cytochrome c1 and Rieske protein, 2 core protein subunits, and additional low-molecular weight protein subunits. The complex exists as an obligatory dimer and forms supercomplexes (SCs) in the inner mitochondrial membrane with cytochrome c oxidase (complex IV, CIV).

It localises to the mitochondrion inner membrane. Its function is as follows. Component of the ubiquinol-cytochrome c oxidoreductase, a multisubunit transmembrane complex that is part of the mitochondrial electron transport chain which drives oxidative phosphorylation. The respiratory chain contains 3 multisubunit complexes succinate dehydrogenase (complex II, CII), ubiquinol-cytochrome c oxidoreductase (cytochrome b-c1 complex, complex III, CIII) and cytochrome c oxidase (complex IV, CIV), that cooperate to transfer electrons derived from NADH and succinate to molecular oxygen, creating an electrochemical gradient over the inner membrane that drives transmembrane transport and the ATP synthase. The cytochrome b-c1 complex catalyzes electron transfer from ubiquinol to cytochrome c, linking this redox reaction to translocation of protons across the mitochondrial inner membrane, with protons being carried across the membrane as hydrogens on the quinol. In the process called Q cycle, 2 protons are consumed from the matrix, 4 protons are released into the intermembrane space and 2 electrons are passed to cytochrome c. This chain is Cytochrome b-c1 complex subunit 7 (UBCRBP), found in Echinococcus multilocularis (Fox tapeworm).